The primary structure comprises 258 residues: GPI alpha-1,4-mannosyltransferase I, stabilizing subunit (258 aa).

An N-terminal signal peptide occupies residues 1 to 21 (MAARVAAVRAAAWLLLGAATG). The Lumenal portion of the chain corresponds to 22–230 (LTRGPAAAFT…PVGLTVHTSL (209 aa)). N103 carries N-linked (GlcNAc...) asparagine glycosylation. The helical transmembrane segment at 231–251 (VCSVTLLITILCSTLILVAVF) threads the bilayer. Residues 252–258 (KYGHFSL) lie on the Cytoplasmic side of the membrane.

It belongs to the PIGX family. In terms of assembly, part of the glycosylphosphatidylinositol-mannosyltransferase I complex that is composed of PIGM and PIGX. Interacts with PIGM; PIGX stabilizes PIGM.

Its subcellular location is the endoplasmic reticulum membrane. Its pathway is glycolipid biosynthesis; glycosylphosphatidylinositol-anchor biosynthesis. Its function is as follows. Stabilizing subunit of the glycosylphosphatidylinositol-mannosyltransferase I complex which catalyzes the transfer of the first mannose, via an alpha-1,4 bond from a dolichol-phosphate-mannose (Dol-P-Man) to the glucosaminyl acyl phosphatidylinositol (GlcN-(acyl)PI) intermediate to generate alpha-D-Man-(1-&gt;4)-alpha-D-GlcN-(1-&gt;6)-(1-radyl,2-acyl-sn-glycero-3-phospho)-2-acyl-inositol and participates in the sixth step of the glycosylphosphatidylinositol-anchor biosynthesis. Probably acts by stabilizing the mannosyltransferase PIGM. This chain is GPI alpha-1,4-mannosyltransferase I, stabilizing subunit, found in Homo sapiens (Human).